We begin with the raw amino-acid sequence, 181 residues long: Acireductone dioxygenase (181 aa).

His91, His93, Glu97, and His136 together coordinate Fe(2+). Residues His91, His93, Glu97, and His136 each contribute to the Ni(2+) site.

The protein belongs to the acireductone dioxygenase (ARD) family. In terms of assembly, monomer. Interacts with MMP14. Fe(2+) is required as a cofactor. The cofactor is Ni(2+).

The protein resides in the cytoplasm. It localises to the nucleus. The protein localises to the cell membrane. It carries out the reaction 1,2-dihydroxy-5-(methylsulfanyl)pent-1-en-3-one + O2 = 4-methylsulfanyl-2-oxobutanoate + formate + 2 H(+). The enzyme catalyses 1,2-dihydroxy-5-(methylsulfanyl)pent-1-en-3-one + O2 = 3-(methylsulfanyl)propanoate + CO + formate + 2 H(+). The protein operates within amino-acid biosynthesis; L-methionine biosynthesis via salvage pathway; L-methionine from S-methyl-5-thio-alpha-D-ribose 1-phosphate: step 5/6. Functionally, catalyzes 2 different reactions between oxygen and the acireductone 1,2-dihydroxy-3-keto-5-methylthiopentene (DHK-MTPene) depending upon the metal bound in the active site. Fe-containing acireductone dioxygenase (Fe-ARD) produces formate and 2-keto-4-methylthiobutyrate (KMTB), the alpha-ketoacid precursor of methionine in the methionine recycle pathway. Ni-containing acireductone dioxygenase (Ni-ARD) produces methylthiopropionate, carbon monoxide and formate, and does not lie on the methionine recycle pathway. The chain is Acireductone dioxygenase (adi1) from Danio rerio (Zebrafish).